A 505-amino-acid chain; its full sequence is Trans-cinnamate 4-monooxygenase (505 aa).

Residues 3-23 (LILLEKSLLAVFFAVIFSIIV) form a helical membrane-spanning segment. (E)-cinnamate-binding positions include 213–218 (RSRLAQ) and alanine 306. Cysteine 447 serves as a coordination point for heme.

It belongs to the cytochrome P450 family. Heme serves as cofactor. As to expression, mostly expressed in stems, and, to a lower extent, in bulbs, roots, leaves and flowers.

The protein resides in the membrane. The catalysed reaction is (E)-cinnamate + reduced [NADPH--hemoprotein reductase] + O2 = (E)-4-coumarate + oxidized [NADPH--hemoprotein reductase] + H2O + H(+). It functions in the pathway alkaloid biosynthesis. The protein operates within phenylpropanoid metabolism; trans-4-coumarate biosynthesis; trans-4-coumarate from trans-cinnamate: step 1/1. Its function is as follows. Catalyzes the first oxidative step of the phenylpropanoid pathway in higher plants by transforming trans-cinnamate into p-coumarate. The compounds formed by this pathway are essential components for lignification, pollination, and defense against ultraviolet light, predators and pathogens. Trans-4-coumarate is a precursor to all amaryllidaceae alkaloids such as galanthamine, lycorine and haemanthamine, and including haemanthamine- and crinamine-type alkaloids, promising anticancer agents. The polypeptide is Trans-cinnamate 4-monooxygenase (Narcissus pseudonarcissus (Daffodil)).